We begin with the raw amino-acid sequence, 591 residues long: Alternative cytochrome c oxidase subunit 1 (591 aa).

Residues V40–S60 traverse the membrane as a helical segment. Heme b is bound at residue H88. A run of 11 helical transmembrane segments spans residues M90–I110, M126–P146, G172–L192, V215–G235, L274–V294, V313–V333, Y337–I357, M377–L397, V412–I432, F453–L473, and F498–V518. Positions 280, 284, 329, and 330 each coordinate Cu cation. Residues H280 to Y284 constitute a cross-link (1'-histidyl-3'-tyrosine (His-Tyr)). Positions 415 and 417 each coordinate heme b.

This sequence belongs to the heme-copper respiratory oxidase family. In terms of assembly, this alternate cytochrome c oxidase consists of a subunit I and two cytochromes c. Equivalents to subunit 2 and 3 are not present in this complex.

The protein resides in the cell membrane. The catalysed reaction is 4 Fe(II)-[cytochrome c] + O2 + 8 H(+)(in) = 4 Fe(III)-[cytochrome c] + 2 H2O + 4 H(+)(out). In terms of biological role, cytochrome c oxidase is the component of the respiratory chain that catalyzes the reduction of oxygen to water. Subunits 1-3 form the functional core of the enzyme complex. Co I is the catalytic subunit of the enzyme. Electrons originating in cytochrome c are transferred via the copper A center of subunit 2 and a low-spin heme of subunit 1 to the bimetallic center formed by a high-spin heme and copper B. The chain is Alternative cytochrome c oxidase subunit 1 (coxN) from Bradyrhizobium diazoefficiens (strain JCM 10833 / BCRC 13528 / IAM 13628 / NBRC 14792 / USDA 110).